A 550-amino-acid polypeptide reads, in one-letter code: MFCVQCEQTIRTPAGNGCSYAQGMCGKTAETSDLQDLLIAALQGLSAWAVKAREYGIINHDVDNFAPRAFFSTLTNVNFDSPRIVGYAREAIALREALKAQCLSVDANAHCDNPMADLQLVSDDLGDLQRQAAEFTPNKDKAAIGENILGLRLLCLYGLKGAAAYMEHAHVLGQYDNDIYAQYHKIMAWLGTWPADMNALLECAMEIGQMNFKVMSILDAGETTKYGHPTPTQVNVKATEGKCILISGHDLKDLYNLLEQTEGTGVNVYTHGEMLPAHGYPELRKFKHLVGNYGSGWQNQQVEFARFPGPIVMTSNCIIDPTVGSYDDRIWTRSIVGWPGVSHLEGDDFGPVIAQAQQMAGFPYSEIPHIITVGFGRQTLLGAADTLIDLVSREKLRHIFLVGGCDGARGERNYFTDFATSVPDDCLILTLACGKYRFNKLEFGDIEGLPRLVDAGQCNDAYSAIILAVTLAEKLGCGVNDLPLSLVLSWFEQKAIVILLTLLSLGVKNIVTGPTAPGFFTPDLLAILNEKFGLRSVTTVEEDMKQLLSA.

[2Fe-2S] cluster-binding residues include Cys-3, Cys-6, Cys-18, and Cys-25. 8 residues coordinate hybrid [4Fe-2O-2S] cluster: His-249, Glu-273, Cys-317, Cys-405, Cys-433, Cys-458, Glu-492, and Lys-494. Cys-405 bears the Cysteine persulfide mark.

Belongs to the HCP family. Requires [2Fe-2S] cluster as cofactor. It depends on hybrid [4Fe-2O-2S] cluster as a cofactor.

It is found in the cytoplasm. The catalysed reaction is A + NH4(+) + H2O = hydroxylamine + AH2 + H(+). Its function is as follows. Catalyzes the reduction of hydroxylamine to form NH(3) and H(2)O. In Salmonella typhimurium (strain LT2 / SGSC1412 / ATCC 700720), this protein is Hydroxylamine reductase.